The following is a 918-amino-acid chain: Valine--tRNA ligase (918 aa).

The short motif at 50–60 is the 'HIGH' region element; it reads PNVTGSLHMGH. Positions 548-552 match the 'KMSKS' region motif; it reads KMSKS. Lysine 551 lines the ATP pocket. The stretch at 849 to 883 forms a coiled coil; that stretch reads NDFVNLEALKDRLTKDLKKVNSDIETLNKRISNKN.

The protein belongs to the class-I aminoacyl-tRNA synthetase family. ValS type 1 subfamily. As to quaternary structure, monomer.

It localises to the cytoplasm. It catalyses the reaction tRNA(Val) + L-valine + ATP = L-valyl-tRNA(Val) + AMP + diphosphate. Its function is as follows. Catalyzes the attachment of valine to tRNA(Val). As ValRS can inadvertently accommodate and process structurally similar amino acids such as threonine, to avoid such errors, it has a 'posttransfer' editing activity that hydrolyzes mischarged Thr-tRNA(Val) in a tRNA-dependent manner. The sequence is that of Valine--tRNA ligase from Prochlorococcus marinus subsp. pastoris (strain CCMP1986 / NIES-2087 / MED4).